Here is a 376-residue protein sequence, read N- to C-terminus: Zinc transporter 7 (376 aa).

Over 1-37 the chain is Cytoplasmic; it reads MLPLSIKDDEYKPPKFNLFRKISGWFRSILSDKTSRN. A helical membrane pass occupies residues 38 to 58; it reads LFFFLCLNLSFAFVELLYGIW. The Lumenal segment spans residues 59–67; sequence SNCLGLISD. The helical transmembrane segment at 68–88 threads the bilayer; the sequence is SFHMFFDSTAILAGLAASVIS. Over 89 to 102 the chain is Cytoplasmic; it reads KWRDNDAFSYGYVR. Residues 103-123 traverse the membrane as a helical segment; the sequence is AEVLAGFVNGLFLIFTAFFIF. Residues 124–140 lie on the Lumenal side of the membrane; that stretch reads SEGVERALAPPDVHHER. Residues 141-161 traverse the membrane as a helical segment; the sequence is LLLVSILGFVVNLVGIFVFKH. The his-rich loop stretch occupies residues 161–218; that stretch reads HGGHGHSHGSGHGHSHSLFNGALDQTHGHGDHCHSHELKHGAAHSHDHAHGHGHFHSH. The Cytoplasmic portion of the chain corresponds to 162–236; that stretch reads GGHGHSHGSG…TGPSRQILQG (75 aa). Residues 188–222 show a composition bias toward basic and acidic residues; the sequence is GHGDHCHSHELKHGAAHSHDHAHGHGHFHSHDGPS. The disordered stretch occupies residues 188–226; sequence GHGDHCHSHELKHGAAHSHDHAHGHGHFHSHDGPSLKET. A helical transmembrane segment spans residues 237–257; that stretch reads VFLHILADTLGSIGVIASAIM. Over 258 to 262 the chain is Lumenal; the sequence is MQNFG. Residues 263-283 form a helical membrane-spanning segment; the sequence is LMIADPICSILIAMLIVISVI. Topologically, residues 284-376 are cytoplasmic; sequence PLLRESVGIL…LYVQIDFAAM (93 aa).

The protein belongs to the cation diffusion facilitator (CDF) transporter (TC 2.A.4) family. SLC30A subfamily. Homooligomer.

The protein resides in the golgi apparatus membrane. The protein localises to the cytoplasmic vesicle. It localises to the golgi apparatus. Its subcellular location is the trans-Golgi network. It is found in the sarcoplasmic reticulum. The protein resides in the mitochondrion. It catalyses the reaction Zn(2+)(in) = Zn(2+)(out). Its function is as follows. Zinc ion transporter mediating zinc entry from the cytosol into the lumen of organelles along the secretory pathway. By contributing to zinc ion homeostasis within the early secretory pathway, regulates the activation and folding of enzymes like alkaline phosphatases. The chain is Zinc transporter 7 (SLC30A7) from Bos taurus (Bovine).